A 232-amino-acid chain; its full sequence is Succinyl-CoA:3-ketoacid coenzyme A transferase subunit A (232 aa).

Residue 24 to 30 (GGFGLCG) participates in CoA binding.

It belongs to the 3-oxoacid CoA-transferase subunit A family. As to quaternary structure, heterodimer of a subunit A and a subunit B.

It catalyses the reaction a 3-oxo acid + succinyl-CoA = a 3-oxoacyl-CoA + succinate. In Helicobacter pylori (strain ATCC 700392 / 26695) (Campylobacter pylori), this protein is Succinyl-CoA:3-ketoacid coenzyme A transferase subunit A (scoA).